Here is a 249-residue protein sequence, read N- to C-terminus: Triosephosphate isomerase (249 aa).

Position 8–10 (8–10) interacts with substrate; it reads NWK. The active-site Electrophile is His-95. Glu-163 functions as the Proton acceptor in the catalytic mechanism. Residues Gly-169 and Ser-209 each coordinate substrate.

The protein belongs to the triosephosphate isomerase family. In terms of assembly, homodimer.

It localises to the cytoplasm. It carries out the reaction D-glyceraldehyde 3-phosphate = dihydroxyacetone phosphate. It functions in the pathway carbohydrate biosynthesis; gluconeogenesis. The protein operates within carbohydrate degradation; glycolysis; D-glyceraldehyde 3-phosphate from glycerone phosphate: step 1/1. Its function is as follows. Involved in the gluconeogenesis. Catalyzes stereospecifically the conversion of dihydroxyacetone phosphate (DHAP) to D-glyceraldehyde-3-phosphate (G3P). This Orientia tsutsugamushi (strain Boryong) (Rickettsia tsutsugamushi) protein is Triosephosphate isomerase.